The chain runs to 827 residues: Penicillin-binding protein 1A (827 aa).

The Cytoplasmic segment spans residues 1-18 (MGKKKKKRKSSAFKIILN). Residues 19–39 (VFLSIFLVAGVAFGGIVFAMI) traverse the membrane as a helical; Signal-anchor for type II membrane protein segment. Residues 40–827 (KTAPPLNVQQ…QNHEDNKNKQ (788 aa)) are Extracellular-facing. Residues 57–229 (SILYDDKGQY…PSVYYPYSSA (173 aa)) form a transglycosylase region. Glu-96 acts as the Proton donor; for transglycosylase activity in catalysis. The interval 357 to 641 (ASAVIMDYHN…AARLWGDIMK (285 aa)) is transpeptidase. Ser-398 acts as the Acyl-ester intermediate; for transpeptidase activity in catalysis. The interval 755–827 (GSLPPTEEKN…QNHEDNKNKQ (73 aa)) is disordered. The segment covering 760-790 (TEEKNNSNTRDKNKDKNKDKDKNKNKDKNPS) has biased composition (basic and acidic residues). Residues 791 to 817 (QDKPNNNNNNNNNDNNNNTKPPENDSN) are compositionally biased toward low complexity. Positions 818–827 (QNHEDNKNKQ) are enriched in basic and acidic residues.

In the N-terminal section; belongs to the glycosyltransferase 51 family. The protein in the C-terminal section; belongs to the transpeptidase family.

It localises to the cell membrane. It catalyses the reaction [GlcNAc-(1-&gt;4)-Mur2Ac(oyl-L-Ala-gamma-D-Glu-L-Lys-D-Ala-D-Ala)](n)-di-trans,octa-cis-undecaprenyl diphosphate + beta-D-GlcNAc-(1-&gt;4)-Mur2Ac(oyl-L-Ala-gamma-D-Glu-L-Lys-D-Ala-D-Ala)-di-trans,octa-cis-undecaprenyl diphosphate = [GlcNAc-(1-&gt;4)-Mur2Ac(oyl-L-Ala-gamma-D-Glu-L-Lys-D-Ala-D-Ala)](n+1)-di-trans,octa-cis-undecaprenyl diphosphate + di-trans,octa-cis-undecaprenyl diphosphate + H(+). The catalysed reaction is Preferential cleavage: (Ac)2-L-Lys-D-Ala-|-D-Ala. Also transpeptidation of peptidyl-alanyl moieties that are N-acyl substituents of D-alanine.. The protein operates within cell wall biogenesis; peptidoglycan biosynthesis. Its function is as follows. Cell wall formation. Synthesis of cross-linked peptidoglycan from the lipid intermediates. The enzyme has a penicillin-insensitive transglycosylase N-terminal domain (formation of linear glycan strands) and a penicillin-sensitive transpeptidase C-terminal domain (cross-linking of the peptide subunits). The polypeptide is Penicillin-binding protein 1A (pbpA) (Clostridium botulinum (strain Langeland / NCTC 10281 / Type F)).